A 683-amino-acid chain; its full sequence is Solute carrier family 28 member 3 (683 aa).

The tract at residues 1-71 is disordered; that stretch reads MSAFKARGVE…EEEEEGEEDQ (71 aa). Residues 1–97 lie on the Cytoplasmic side of the membrane; that stretch reads MSAFKARGVE…FYKRNKKIIH (97 aa). Positions 60–71 are enriched in acidic residues; the sequence is DNEEEEEGEEDQ. Residues 98–118 traverse the membrane as a helical segment; that stretch reads YTFLGLLLVGYFALVIAACIV. The Extracellular segment spans residues 119-123; it reads NFKQS. The helical transmembrane segment at 124–144 threads the bilayer; sequence LALLVLTLIAIFFFFWDLFIA. Residues 145–168 are Cytoplasmic-facing; the sequence is KYGDKIAEALKPCQKFLDNHWSII. The chain crosses the membrane as a helical span at residues 169 to 189; that stretch reads RWFVYGALLLAVILWLTLDTA. The Extracellular segment spans residues 190-192; sequence KRG. Residues 193 to 214 traverse the membrane as a helical segment; that stretch reads ANQVIPFFGLILYILLVFIFSK. Residues 215–222 are Cytoplasmic-facing; sequence HPTKVRWR. The helical transmembrane segment at 223-242 threads the bilayer; that stretch reads IVIWGLLLQFIFGLIILRTK. Residues 243–279 are Extracellular-facing; that stretch reads PGLDAFNWLGIQVQTFLKYTDAGSRFLFGDDFQDHFF. A helical transmembrane segment spans residues 280-300; it reads AFAVLPIVIFFSTVMSMMYYL. The Cytoplasmic portion of the chain corresponds to 301 to 324; sequence GLMQWLILKVGWLMQITMGTSPME. Residues 325 to 343 constitute an intramembrane region (helical); that stretch reads SMVSAGNIFVGQTESPLLI. Residues 344 to 356 lie on the Cytoplasmic side of the membrane; it reads RPYLADLTISEMH. The chain crosses the membrane as a helical span at residues 357 to 379; that stretch reads SVMSSGFATIAGSVLGAYISLGI. Residues 380–381 are Extracellular-facing; it reads PA. Residues 382 to 403 traverse the membrane as a helical segment; that stretch reads AHLLTASVMSAPAALAISKTFW. Residues 404–438 lie on the Cytoplasmic side of the membrane; the sequence is PETKKSKNSTQTSIKLEKGQENNLVEAASQGASAA. A helical transmembrane segment spans residues 439–464; sequence VPLVANIAANLIAFLAVLAFINATLS. Residues 465–502 are Extracellular-facing; it reads WLGSMFNYPQFSFEIICSYVLMPFAFMMGVNYDDSFLV. The helical intramembrane region spans 503-522; that stretch reads AELLGMKTFFNEFVAYQRLS. Over 523 to 561 the chain is Extracellular; the sequence is EYIHNRESGGPLFVDGVRQYMSVRSEAIATYALCGFANF. Residues 562 to 572 form a helical membrane-spanning segment; it reads GSLGIMIGGLS. Residues 573-585 are Cytoplasmic-facing; it reads SLAPHRKSDIASC. Residues 586–608 traverse the membrane as a helical segment; sequence GIRALIAGTIACFSTACIAGVLY. The Extracellular segment spans residues 609 to 683; it reads IPELYCPNLL…GFNCSEVRPE (75 aa).

It belongs to the concentrative nucleoside transporter (CNT) (TC 2.A.41) family. Homotrimer.

The protein localises to the cell membrane. It catalyses the reaction thymidine(out) + 2 Na(+)(out) = thymidine(in) + 2 Na(+)(in). The catalysed reaction is cytidine(out) + 2 Na(+)(out) = cytidine(in) + 2 Na(+)(in). It carries out the reaction uridine(out) + 2 Na(+)(out) = uridine(in) + 2 Na(+)(in). The enzyme catalyses adenosine(out) + 2 Na(+)(out) = adenosine(in) + 2 Na(+)(in). It catalyses the reaction guanosine(out) + 2 Na(+)(out) = guanosine(in) + 2 Na(+)(in). The catalysed reaction is inosine(out) + 2 Na(+)(out) = inosine(in) + 2 Na(+)(in). Functionally, sodium-dependent, pyrimidine- and purine-selective. Involved in the homeostasis of endogenous nucleosides. Exhibits the transport characteristics of the nucleoside transport system cib or N3 subtype (N3/cib) (with marked transport of both thymidine and inosine). Employs a 2:1 sodium/nucleoside ratio. Also able to transport gemcitabine, 3'-azido-3'-deoxythymidine (AZT), ribavirin and 3-deazauridine. The protein is Solute carrier family 28 member 3 (SLC28A3) of Eptatretus stoutii (Pacific hagfish).